We begin with the raw amino-acid sequence, 874 residues long: Protein Son (874 aa).

3 disordered regions span residues 1 to 45, 68 to 98, and 120 to 368; these read MTEN…ERPD, RRSN…NIKP, and ELLD…SRDL. Polar residues predominate over residues 12 to 24; sequence ETPQVAGSQTNPP. The span at 70–89 shows a compositional bias: low complexity; it reads SNSNELGNNDESGESESSAS. Basic residues-rich tracts occupy residues 128 to 147 and 162 to 175; these read KKKK…KKKT and KHKH…HKDI. 2 stretches are compositionally biased toward basic and acidic residues: residues 176-219 and 226-277; these read RVKD…KDKF and SEKE…ERVR. The G-patch domain occupies 705–751; it reads TGGMGMALLQKMGWKPGEGLGRCKTGSLQPLLLDVKLDKRGLVSRDD. The DRBM domain maps to 800-870; the sequence is HPVCVLNELT…AALCLRSLGI (71 aa).

Expressed in ovarian nurse cells (at protein level).

The protein localises to the nucleus. RNA-binding protein that protects nascent transcripts containing intronic transposable sequences, known as INE-1, from being degraded by DIP1. Modulates DIP1 activity by repressing its sumoylation levels. This ensures that intronic sequences will be degradated only after splicing. In the ovaries, regulates germline stem cells (GSCs) self-renewal by repressing the expression of the GSC differentiation-promoting factor Rga. This chain is Protein Son, found in Drosophila melanogaster (Fruit fly).